The following is a 274-amino-acid chain: Non-homologous end joining protein Ku (274 aa).

The 185-residue stretch at 11-195 (ITFGLVNVPV…KYKITPKELS (185 aa)) folds into the Ku domain.

Belongs to the prokaryotic Ku family. In terms of assembly, homodimer. Interacts with LigD.

In terms of biological role, with LigD forms a non-homologous end joining (NHEJ) DNA repair enzyme, which repairs dsDNA breaks with reduced fidelity. Binds linear dsDNA with 5'- and 3'- overhangs but not closed circular dsDNA nor ssDNA. Recruits and stimulates the ligase activity of LigD. The protein is Non-homologous end joining protein Ku of Coxiella burnetii (strain RSA 331 / Henzerling II).